The following is a 303-amino-acid chain: Protein-lysine N-methyltransferase rrg1 (303 aa).

Residues W117, 143–145, D165, W198, and S221 each bind S-adenosyl-L-methionine; that span reads GAG.

Belongs to the class I-like SAM-binding methyltransferase superfamily. METTL21 family.

It is found in the cytoplasm. The protein resides in the nucleus. S-adenosyl-L-methionine-dependent protein-lysine N-methyltransferase that methylates elongation factor 2 and elongation factor 3A. The protein is Protein-lysine N-methyltransferase rrg1 of Schizosaccharomyces pombe (strain 972 / ATCC 24843) (Fission yeast).